Reading from the N-terminus, the 195-residue chain is Pyridoxal 5'-phosphate synthase subunit PdxT (195 aa).

An L-glutamine-binding site is contributed by 46–48; the sequence is GES. Residue cysteine 78 is the Nucleophile of the active site. L-glutamine contacts are provided by residues arginine 107 and 135–136; that span reads IR. Active-site charge relay system residues include histidine 172 and glutamate 174.

The protein belongs to the glutaminase PdxT/SNO family. As to quaternary structure, in the presence of PdxS, forms a dodecamer of heterodimers. Only shows activity in the heterodimer.

The enzyme catalyses aldehydo-D-ribose 5-phosphate + D-glyceraldehyde 3-phosphate + L-glutamine = pyridoxal 5'-phosphate + L-glutamate + phosphate + 3 H2O + H(+). It carries out the reaction L-glutamine + H2O = L-glutamate + NH4(+). The protein operates within cofactor biosynthesis; pyridoxal 5'-phosphate biosynthesis. Its function is as follows. Catalyzes the hydrolysis of glutamine to glutamate and ammonia as part of the biosynthesis of pyridoxal 5'-phosphate. The resulting ammonia molecule is channeled to the active site of PdxS. This is Pyridoxal 5'-phosphate synthase subunit PdxT from Corynebacterium jeikeium (strain K411).